The sequence spans 545 residues: Monocarboxylate transporter 8 (545 aa).

The tract at residues 1–98 (MALPSPASEE…VETRGTARGF (98 aa)) is disordered. Alanine 2 bears the N-acetylalanine mark. Over 2–102 (ALPSPASEEA…GTARGFQPPE (101 aa)) the chain is Cytoplasmic. A run of 2 repeats spans residues 29–50 (PVPE…PVPV) and 51–72 (PPPE…PLPV). Residues 29–72 (PVPEPEPEPEPEPEPEPEPVPVPPPEPQPEPEPQPLPDPAPLPV) form a 2 X 22 AA approximate tandem repeats region. A compositionally biased stretch (acidic residues) spans 33-45 (PEPEPEPEPEPEP). Over residues 46–70 (EPVPVPPPEPQPEPEPQPLPDPAPL) the composition is skewed to pro residues. The helical transmembrane segment at 103–123 (GGFGWIVVFAATWCNGSIFGI) threads the bilayer. Residues 124–149 (HNSVGILYSMLLEEEKEKNRQVEFQA) lie on the Extracellular side of the membrane. A helical transmembrane segment spans residues 150–170 (AWVGALAMGMIFFCSPIVSIF). At 171 to 181 (TDRLGCRITAT) the chain is on the cytoplasmic side. Residues 182–202 (TGAAVAFIGLHTSSFTSSLSL) traverse the membrane as a helical segment. Residues 203-204 (RY) lie on the Extracellular side of the membrane. Residues 205-225 (FTYGILFGCGCSFAFQPSLVI) traverse the membrane as a helical segment. At 226–235 (LGHYFQRRLG) the chain is on the cytoplasmic side. A helical membrane pass occupies residues 236-256 (LANGVVSAGSSIFSMSFPFLI). The Extracellular segment spans residues 257–264 (KMLGDRIK). A helical transmembrane segment spans residues 265–285 (LAQTFQVLSTFMFVLTLLSLT). Residues 286-328 (YRPLLPSSQDTPSKRGAHTLRQRFLVQFRKYFNMRVFRQRTYR) are Cytoplasmic-facing. The chain crosses the membrane as a helical span at residues 329–349 (IWAFGIAAAALGYFVPYVHLM). Residues 350 to 362 (KYVEDKFKEIKET) lie on the Extracellular side of the membrane. Residues 363 to 383 (WVLLVCIGATSGLGRLVSGHI) traverse the membrane as a helical segment. Topologically, residues 384 to 392 (SDSIPGLKK) are cytoplasmic. A helical transmembrane segment spans residues 393-413 (IYLQVLSFLLLGLMSMMIPLC). Over 414 to 415 (RD) the chain is Extracellular. A helical membrane pass occupies residues 416 to 436 (FGGLIVVCLFLGLCDGFFITI). Residues 437–453 (MAPIAFELVGPMQASQA) are Cytoplasmic-facing. Residues 454–474 (IGYLLGMMALPMIAGPPIAGL) form a helical membrane-spanning segment. At 475-483 (LRNCFGNYH) the chain is on the extracellular side. Residues 484–504 (VAFYFAGVPPIIGAVILFFVP) form a helical membrane-spanning segment. Residues 505–545 (LMHQRMFKKEQRESSKDKMLSHDPDPNGELLPGSPTPEEPI) are Cytoplasmic-facing. The segment covering 514–529 (EQRESSKDKMLSHDPD) has biased composition (basic and acidic residues). Residues 514 to 545 (EQRESSKDKMLSHDPDPNGELLPGSPTPEEPI) are disordered. Phosphothreonine is present on threonine 540.

This sequence belongs to the major facilitator superfamily. Monocarboxylate porter (TC 2.A.1.13) family. In terms of assembly, monomer. Homodimer. Homooligomer. Expressed at highest levels in liver, lower levels in brain, kidney and heart (at protein level). Expressed in microvessels of the blood-brain barrier (BBB) (at protein level).

The protein resides in the cell membrane. It is found in the apical cell membrane. The catalysed reaction is 3,3',5-triiodo-L-thyronine(out) = 3,3',5-triiodo-L-thyronine(in). It catalyses the reaction 3,3',5'-triiodo-L-thyronine(out) = 3,3',5'-triiodo-L-thyronine(in). It carries out the reaction L-thyroxine(out) = L-thyroxine(in). The enzyme catalyses 3,3'-diiodo-L-thyronine(out) = 3,3'-diiodo-L-thyronine(in). In terms of biological role, specific thyroid hormone transmembrane transporter, that mediates both uptake and efflux of thyroid hormone across the cell membrane independently of pH or a Na(+) gradient. Major substrates are the iodothyronines T3 and T4 and to a lesser extent rT3 and 3,3-diiodothyronine (3,3'-T2). Acts as an important mediator of thyroid hormone transport, especially T3, through the blood-brain barrier. The sequence is that of Monocarboxylate transporter 8 (SLC16A2) from Rattus norvegicus (Rat).